A 159-amino-acid chain; its full sequence is D-aminoacyl-tRNA deacylase (159 aa).

The Gly-cisPro motif, important for rejection of L-amino acids motif lies at 146-147; the sequence is GP.

The protein belongs to the DTD family. Homodimer.

Its subcellular location is the cytoplasm. The enzyme catalyses glycyl-tRNA(Ala) + H2O = tRNA(Ala) + glycine + H(+). The catalysed reaction is a D-aminoacyl-tRNA + H2O = a tRNA + a D-alpha-amino acid + H(+). Its function is as follows. An aminoacyl-tRNA editing enzyme that deacylates mischarged D-aminoacyl-tRNAs. Also deacylates mischarged glycyl-tRNA(Ala), protecting cells against glycine mischarging by AlaRS. Acts via tRNA-based rather than protein-based catalysis; rejects L-amino acids rather than detecting D-amino acids in the active site. By recycling D-aminoacyl-tRNA to D-amino acids and free tRNA molecules, this enzyme counteracts the toxicity associated with the formation of D-aminoacyl-tRNA entities in vivo and helps enforce protein L-homochirality. The polypeptide is D-aminoacyl-tRNA deacylase (Bifidobacterium animalis subsp. lactis (strain AD011)).